The primary structure comprises 163 residues: MADSSFDIVSKVDRQEVDNALNQAAKELATRFDFRGTDTTIEWQGEEGIILVSSTEERVKAAVDVFKEKLIRRDISMKAFDAGDPQPSGKTYKVIGSIKQGISSEDAKKVTKLIRDEGPKGVKAQIQGEEIRVSSKKRDDLQAVQALLRGADLDFAVQFVNYR.

The protein belongs to the YajQ family.

Functionally, nucleotide-binding protein. This is Nucleotide-binding protein Mflv_5248 from Mycolicibacterium gilvum (strain PYR-GCK) (Mycobacterium gilvum (strain PYR-GCK)).